The primary structure comprises 246 residues: Ribonuclease PH (246 aa).

Phosphate-binding positions include arginine 95 and 133–135; that span reads GTR.

Belongs to the RNase PH family. Homohexameric ring arranged as a trimer of dimers.

The catalysed reaction is tRNA(n+1) + phosphate = tRNA(n) + a ribonucleoside 5'-diphosphate. Phosphorolytic 3'-5' exoribonuclease that plays an important role in tRNA 3'-end maturation. Removes nucleotide residues following the 3'-CCA terminus of tRNAs; can also add nucleotides to the ends of RNA molecules by using nucleoside diphosphates as substrates, but this may not be physiologically important. Probably plays a role in initiation of 16S rRNA degradation (leading to ribosome degradation) during starvation. The chain is Ribonuclease PH from Bordetella bronchiseptica (strain ATCC BAA-588 / NCTC 13252 / RB50) (Alcaligenes bronchisepticus).